Consider the following 250-residue polypeptide: Dimethyl sulfide dehydrogenase assembly chaperone protein (250 aa).

The disordered stretch occupies residues 231–250 (SAEARSDSAPDAAAHQNLWG).

This sequence belongs to the type II DMSO reductase enzyme chaperone family.

Its subcellular location is the cytoplasm. Its function is as follows. May function as a system-specific chaperone protein essential for the assembly of an active dimethyl sulfide dehydrogenase DdhABC. In Rhodovulum sulfidophilum (Rhodobacter sulfidophilus), this protein is Dimethyl sulfide dehydrogenase assembly chaperone protein (ddhD).